The chain runs to 734 residues: Polyribonucleotide nucleotidyltransferase (734 aa).

The Mg(2+) site is built by Asp-503 and Asp-509. The KH domain maps to 570-629; that stretch reads PKLSTIQVPVDAIGMIIGKGGETIRSITEETGAQINVDDDGTVTISSPNGESAAAAIETI. An S1 motif domain is found at 639–713; sequence GTIYMGKVKD…GKIRYALSIK (75 aa).

It belongs to the polyribonucleotide nucleotidyltransferase family. The cofactor is Mg(2+).

It is found in the cytoplasm. The catalysed reaction is RNA(n+1) + phosphate = RNA(n) + a ribonucleoside 5'-diphosphate. Involved in mRNA degradation. Catalyzes the phosphorolysis of single-stranded polyribonucleotides processively in the 3'- to 5'-direction. The chain is Polyribonucleotide nucleotidyltransferase from Chlorobium phaeobacteroides (strain BS1).